Reading from the N-terminus, the 297-residue chain is Phosphoribosylaminoimidazole-succinocarboxamide synthase (297 aa).

This sequence belongs to the SAICAR synthetase family.

It catalyses the reaction 5-amino-1-(5-phospho-D-ribosyl)imidazole-4-carboxylate + L-aspartate + ATP = (2S)-2-[5-amino-1-(5-phospho-beta-D-ribosyl)imidazole-4-carboxamido]succinate + ADP + phosphate + 2 H(+). The protein operates within purine metabolism; IMP biosynthesis via de novo pathway; 5-amino-1-(5-phospho-D-ribosyl)imidazole-4-carboxamide from 5-amino-1-(5-phospho-D-ribosyl)imidazole-4-carboxylate: step 1/2. This is Phosphoribosylaminoimidazole-succinocarboxamide synthase (purC) from Mycobacterium leprae (strain TN).